The chain runs to 248 residues: Ubiquinone biosynthesis O-methyltransferase (248 aa).

S-adenosyl-L-methionine-binding residues include R41, G72, D93, and M136.

This sequence belongs to the methyltransferase superfamily. UbiG/COQ3 family.

It carries out the reaction a 3-demethylubiquinol + S-adenosyl-L-methionine = a ubiquinol + S-adenosyl-L-homocysteine + H(+). The catalysed reaction is a 3-(all-trans-polyprenyl)benzene-1,2-diol + S-adenosyl-L-methionine = a 2-methoxy-6-(all-trans-polyprenyl)phenol + S-adenosyl-L-homocysteine + H(+). It functions in the pathway cofactor biosynthesis; ubiquinone biosynthesis. O-methyltransferase that catalyzes the 2 O-methylation steps in the ubiquinone biosynthetic pathway. The protein is Ubiquinone biosynthesis O-methyltransferase of Rhizobium etli (strain CIAT 652).